The sequence spans 422 residues: ATP-dependent RNA helicase RhlB (422 aa).

The Q motif signature appears at 9 to 37 (QKFSDFALHPLVIKAIENQGFYHCTPIQA). Positions 40-219 (FPITLAGRDV…FEQMNHPEYI (180 aa)) constitute a Helicase ATP-binding domain. Position 53–60 (53–60 (AQTGTGKT)) interacts with ATP. The DEAD box signature appears at 165–168 (DEAD). Residues 245-390 (RLLQTLIEEE…TSEYNKEALL (146 aa)) enclose the Helicase C-terminal domain. The segment at 394–422 (PQPKRLQRHHRHYAGSRNQGASRKPRSPQ) is disordered. The span at 398-407 (RLQRHHRHYA) shows a compositional bias: basic residues.

This sequence belongs to the DEAD box helicase family. RhlB subfamily. Component of the RNA degradosome, which is a multiprotein complex involved in RNA processing and mRNA degradation.

It localises to the cytoplasm. The catalysed reaction is ATP + H2O = ADP + phosphate + H(+). DEAD-box RNA helicase involved in RNA degradation. Has RNA-dependent ATPase activity and unwinds double-stranded RNA. In Hamiltonella defensa subsp. Acyrthosiphon pisum (strain 5AT), this protein is ATP-dependent RNA helicase RhlB.